We begin with the raw amino-acid sequence, 191 residues long: Ferric nitrobindin-like protein (191 aa).

The short motif at 20 to 26 is the GXWXGXG element; it reads GNWAGAG.

It belongs to the nitrobindin family.

The chain is Ferric nitrobindin-like protein from Streptomyces avermitilis (strain ATCC 31267 / DSM 46492 / JCM 5070 / NBRC 14893 / NCIMB 12804 / NRRL 8165 / MA-4680).